A 568-amino-acid polypeptide reads, in one-letter code: TNF receptor-associated factor 3 (568 aa).

The tract at residues Met1–Gly28 is disordered. At Ser9 the chain carries Phosphoserine. Residue Cys56 forms a Glycyl cysteine thioester (Cys-Gly) (interchain with G-Cter in ubiquitin) linkage. The RING-type zinc-finger motif lies at Cys68–Met77. Residue Cys124 forms a Glycyl cysteine thioester (Cys-Gly) (interchain with G-Cter in ubiquitin) linkage. 2 consecutive TRAF-type zinc fingers follow at residues Val135–Gln190 and Lys191–Lys249. A Glycyl lysine isopeptide (Lys-Gly) (interchain with G-Cter in ubiquitin) cross-link involves residue Lys168. A coiled-coil region spans residues Ser267–Arg338. A Glycyl lysine isopeptide (Lys-Gly) (interchain with G-Cter in ubiquitin) cross-link involves residue Lys329. The segment at Leu392–Asn415 is (Microbial infection) Interaction with glycoprotein N of Andes and New York hantaviruses. One can recognise an MATH domain in the interval Asn415–Val560.

It belongs to the TNF receptor-associated factor family. A subfamily. In terms of assembly, homotrimer. Heterotrimer with TRAF2 and TRAF5. Interacts with LTBR/TNFRSF3, TNFRSF4, TNFRSF5/CD40, TNFRSF8/CD30, TNFRSF13C TNFRSF17/BCMA, TLR4 and EDAR. Interacts with MAP3K5, MAP3K14, TRAIP/TRIP, TDP2/TTRAP, TANK/ITRAF and TRAF3IP1. Interaction with TNFRSF5/CD40 is modulated by TANK/ITRAF, which competes for the same binding site. Interacts with TICAM1. Interacts with TRAFD1. Interacts with OTUB1, OTUB2 and OTUD5. Interacts with RNF216, OPTN and TBK1. Identified in a complex with TRAF2, MAP3K14 and BIRC3. Interacts with BIRC2 and BIRC3. Upon exposure to bacterial lipopolysaccharide (LPS), recruited to a transient complex containing TLR4, TRAF3, TRAF6, IKBKG, MAP3K7, MYD88, TICAM1, BIRC2, BIRC3 and UBE2N. Interacts (via RING-type zinc finger domain) with SRC. Interacts with CARD14. Interacts (via MATH domain) with PTPN22; the interaction promotes TRAF3 polyubiquitination. Interacts with MAVS. Directly interacts with DDX3X; this interaction stimulates TRAF3 'Lys-63' ubiquitination. Interacts with IRF3. Interacts with IKBKE in the course of Sendai virus infection. Interacts with TRIM35. Interacts with GAPDH; promoting TRAF3 ubiquitination. Interacts with PPP3CA and PPP3CB. Interacts with ATP1B1; promoting TRAF3 ubiquitination. Interacts with RALGDS. Interacts with FBXO11. As to quaternary structure, (Microbial infection) Interacts (via N-terminus) with New York hantavirus glycoprotein N (via C-terminus); this interaction inhibits the formation of TRAF3-TBK1 complexes. (Microbial infection) Interacts with Andes hantavirus glycoprotein N (via C-terminus); this interaction inhibits the formation of TRAF3-TBK1 complexes. In terms of assembly, (Microbial infection) Interacts with Tula hantavirus glycoprotein N (via C-terminus); this interaction inhibits the formation of TRAF3-TBK1 complexes. As to quaternary structure, (Microbial infection) Interacts with Epstein-Barr virus protein LMP1. Post-translationally, undergoes 'Lys-48'-linked polyubiquitination, leading to its proteasomal degradation in response to signaling by TNFSF13B, TLR4 or through CD40. 'Lys-48'-linked polyubiquitinated form is deubiquitinated by OTUD7B, preventing TRAF3 proteolysis and over-activation of non-canonical NF-kappa-B. Undergoes 'Lys-63'-linked ubiquitination during early stages of virus infection, and 'Lys-48'-linked ubiquitination during later stages. Undergoes both 'Lys-48'-linked and 'Lys-63'-linked ubiquitination in response to TLR3 and TLR4 signaling. 'Lys-63'-linked ubiquitination can be mediated by TRIM35. Deubiquitinated by OTUB1, OTUB2 and OTUD5. Undergoes 'Lys-63'-linked deubiquitination by MYSM1 to terminate the pattern-recognition receptors/PRRs pathways. Also undergoes 'Lys-29'-linked ubiquitination on Cys-56 and Cys-124 by NEDD4L; leading to increased 'Lys-48'- and 'Lys-63'-linked ubiquitination as well as increased binding to TBK1. TLR4 signals emanating from bacteria containing vesicles trigger 'Lys-33'-linked polyubiquitination that promotes the assembly of the exocyst complex thereby connecting innate immune signaling to the cellular trafficking apparatus. Deubiquitinated by USP25 during viral infection, leading to TRAF3 stabilization and type I interferon production. Ubiquitinated at Lys-329 by the SCF(FBXL2) complex, leading to its degradation by the proteasome. 'Lys-63'-linked ubiquitination by FBXO11 in a NEDD8-dependent manner promotes the amplification of IFN-I signaling. In terms of processing, (Microbial infection) Cleaved by enterovirus D68 protease 2A; leading to inhibition of NF-kappa-B or IFN-beta triggered by TRAF3.

It is found in the cytoplasm. The protein localises to the endosome. Its subcellular location is the mitochondrion. It carries out the reaction S-ubiquitinyl-[E2 ubiquitin-conjugating enzyme]-L-cysteine + [acceptor protein]-L-lysine = [E2 ubiquitin-conjugating enzyme]-L-cysteine + N(6)-ubiquitinyl-[acceptor protein]-L-lysine.. Its function is as follows. Cytoplasmic E3 ubiquitin ligase that regulates various signaling pathways, such as the NF-kappa-B, mitogen-activated protein kinase (MAPK) and interferon regulatory factor (IRF) pathways, and thus controls a lot of biological processes in both immune and non-immune cell types. In TLR and RLR signaling pathways, acts as an E3 ubiquitin ligase promoting the synthesis of 'Lys-63'-linked polyubiquitin chains on several substrates such as ASC that lead to the activation of the type I interferon response or the inflammasome. Following the activation of certain TLRs such as TLR4, acts as a negative NF-kappa-B regulator, possibly to avoid unregulated inflammatory response, and its degradation via 'Lys-48'-linked polyubiquitination is required for MAPK activation and production of inflammatory cytokines. Alternatively, when TLR4 orchestrates bacterial expulsion, TRAF3 undergoes 'Lys-33'-linked polyubiquitination and subsequently binds to RALGDS, mobilizing the exocyst complex to rapidly expel intracellular bacteria back for clearance. Also acts as a constitutive negative regulator of the alternative NF-kappa-B pathway, which controls B-cell survival and lymphoid organ development. Required for normal antibody isotype switching from IgM to IgG. Plays a role T-cell dependent immune responses. Down-regulates proteolytic processing of NFKB2, and thereby inhibits non-canonical activation of NF-kappa-B. Promotes ubiquitination and proteasomal degradation of MAP3K14. The protein is TNF receptor-associated factor 3 of Homo sapiens (Human).